Here is a 315-residue protein sequence, read N- to C-terminus: PIH1 domain-containing protein 2 (315 aa).

The protein belongs to the PIH1 family.

The chain is PIH1 domain-containing protein 2 (PIH1D2) from Homo sapiens (Human).